The chain runs to 375 residues: DNA replication and repair protein RecF (375 aa).

30-37 (GENAQGKT) lines the ATP pocket.

It belongs to the RecF family.

It is found in the cytoplasm. Its function is as follows. The RecF protein is involved in DNA metabolism; it is required for DNA replication and normal SOS inducibility. RecF binds preferentially to single-stranded, linear DNA. It also seems to bind ATP. This chain is DNA replication and repair protein RecF, found in Bacillus thuringiensis (strain Al Hakam).